We begin with the raw amino-acid sequence, 886 residues long: KH domain-containing protein hrpk-2 (886 aa).

Over residues 359-368 the composition is skewed to basic and acidic residues; sequence DNHFYNDKDS. The interval 359-433 is disordered; sequence DNHFYNDKDS…SHRKESACVD (75 aa). Composition is skewed to basic residues over residues 369–388 and 415–425; these read GKHHRHRHRSKNNKKHKKHY and HERKKRQRSSH. 2 consecutive KH domains span residues 698-761 and 775-839; these read KETV…IEKI and PGIF…AYLT.

The chain is KH domain-containing protein hrpk-2 from Caenorhabditis elegans.